The following is a 264-amino-acid chain: Signal peptidase I (264 aa).

Topologically, residues 1–18 (MNRDNINSNKTVKQEFGS) are cytoplasmic. Residues 19–39 (FAFVICIALVIRILIMEPFTV) form a helical membrane-spanning segment. Topologically, residues 40-264 (PTGSMKATIL…IFKNLYNVDE (225 aa)) are extracellular. Residues serine 43 and lysine 106 contribute to the active site.

Belongs to the peptidase S26 family.

It is found in the cell membrane. The enzyme catalyses Cleavage of hydrophobic, N-terminal signal or leader sequences from secreted and periplasmic proteins.. This chain is Signal peptidase I (lepB), found in Rickettsia prowazekii (strain Madrid E).